A 109-amino-acid polypeptide reads, in one-letter code: Large ribosomal subunit protein bL19 (109 aa).

Belongs to the bacterial ribosomal protein bL19 family.

Functionally, this protein is located at the 30S-50S ribosomal subunit interface and may play a role in the structure and function of the aminoacyl-tRNA binding site. The protein is Large ribosomal subunit protein bL19 of Rubrobacter xylanophilus (strain DSM 9941 / JCM 11954 / NBRC 16129 / PRD-1).